The chain runs to 138 residues: Acidic phospholipase A2 pgPLA 1b/pgPLA 2b (138 aa).

Residues 1–16 form the signal peptide; the sequence is MRTLWIMAVLLVGVKG. Disulfide bonds link Cys42-Cys131, Cys44-Cys60, Cys59-Cys111, Cys65-Cys138, Cys66-Cys104, Cys73-Cys97, and Cys91-Cys102. Ca(2+) is bound by residues Tyr43, Gly45, and Gly47. The active site involves His63. Asp64 contacts Ca(2+). Residue Asp105 is part of the active site.

This sequence belongs to the phospholipase A2 family. Group II subfamily. D49 sub-subfamily. Requires Ca(2+) as cofactor. In terms of tissue distribution, expressed by the venom gland.

The protein localises to the secreted. The catalysed reaction is a 1,2-diacyl-sn-glycero-3-phosphocholine + H2O = a 1-acyl-sn-glycero-3-phosphocholine + a fatty acid + H(+). Its function is as follows. PLA2 catalyzes the calcium-dependent hydrolysis of the 2-acyl groups in 3-sn-phosphoglycerides. This is Acidic phospholipase A2 pgPLA 1b/pgPLA 2b from Protobothrops flavoviridis (Habu).